Consider the following 81-residue polypeptide: Control protein C.BamHI (81 aa).

The 56-residue stretch at 13-68 (VRQIRLSKSNMSQEKLAFECDLHRTYISDIERGTRNVSLDNIEKISKALGVQPKDL) folds into the HTH cro/C1-type domain. The segment at residues 25–44 (QEKLAFECDLHRTYISDIER) is a DNA-binding region (H-T-H motif).

May help modulate methylase (M) and restriction enzyme (R) expression as cells undergo physiological changes such as sporulation or transformation. The chain is Control protein C.BamHI from Bacillus amyloliquefaciens (Bacillus velezensis).